The chain runs to 636 residues: DNA primase (636 aa).

A CHC2-type zinc finger spans residues 44-68 (CPFHDEKTPSFHVRPNHGHFHCFGC). Residues 266–352 (HQAVVVEGYT…SGQSFVAVAA (87 aa)) form the Toprim domain. Mg(2+) contacts are provided by glutamate 272, aspartate 323, and aspartate 325. A compositionally biased stretch (basic and acidic residues) spans 443–459 (REEAKGGGRKDNNRRGQ). The disordered stretch occupies residues 443–481 (REEAKGGGRKDNNRRGQETAARPKPPPVQRPDPTDPTLW).

Belongs to the DnaG primase family. As to quaternary structure, monomer. Interacts with DnaB. Zn(2+) serves as cofactor. Requires Mg(2+) as cofactor.

It catalyses the reaction ssDNA + n NTP = ssDNA/pppN(pN)n-1 hybrid + (n-1) diphosphate.. Its function is as follows. RNA polymerase that catalyzes the synthesis of short RNA molecules used as primers for DNA polymerase during DNA replication. This is DNA primase from Mycolicibacterium smegmatis (strain ATCC 700084 / mc(2)155) (Mycobacterium smegmatis).